The sequence spans 206 residues: FMN-dependent NADH:quinone oxidoreductase (206 aa).

Residues Ser-9, 15–17 (SVS), and 139–142 (SRGG) contribute to the FMN site.

Belongs to the azoreductase type 1 family. In terms of assembly, homodimer. It depends on FMN as a cofactor.

It catalyses the reaction 2 a quinone + NADH + H(+) = 2 a 1,4-benzosemiquinone + NAD(+). The enzyme catalyses N,N-dimethyl-1,4-phenylenediamine + anthranilate + 2 NAD(+) = 2-(4-dimethylaminophenyl)diazenylbenzoate + 2 NADH + 2 H(+). Its function is as follows. Quinone reductase that provides resistance to thiol-specific stress caused by electrophilic quinones. Functionally, also exhibits azoreductase activity. Catalyzes the reductive cleavage of the azo bond in aromatic azo compounds to the corresponding amines. This is FMN-dependent NADH:quinone oxidoreductase from Cupriavidus necator (strain ATCC 17699 / DSM 428 / KCTC 22496 / NCIMB 10442 / H16 / Stanier 337) (Ralstonia eutropha).